Here is a 497-residue protein sequence, read N- to C-terminus: Mechanosensitive ion channel protein 1, mitochondrial (497 aa).

Residues 1-86 (MAGVRLSLLK…RAFSSKSDDF (86 aa)) constitute a mitochondrion transit peptide. The next 5 membrane-spanning stretches (helical) occupy residues 152 to 172 (DVIV…VVMP), 216 to 236 (LVTF…TIAA), 238 to 258 (YFSP…LYRW), 280 to 300 (VLTL…MASA), and 305 to 325 (VAVQ…AFAA).

It belongs to the MscS (TC 1.A.23) family.

The protein resides in the mitochondrion membrane. Its function is as follows. Mechanosensitive channel that opens in response to stretch forces in the membrane lipid bilayer. This is Mechanosensitive ion channel protein 1, mitochondrial (MSL1) from Arabidopsis thaliana (Mouse-ear cress).